The chain runs to 133 residues: Ribosome-binding factor A (133 aa).

It belongs to the RbfA family. As to quaternary structure, monomer. Binds 30S ribosomal subunits, but not 50S ribosomal subunits or 70S ribosomes.

The protein localises to the cytoplasm. Its function is as follows. One of several proteins that assist in the late maturation steps of the functional core of the 30S ribosomal subunit. Associates with free 30S ribosomal subunits (but not with 30S subunits that are part of 70S ribosomes or polysomes). Required for efficient processing of 16S rRNA. May interact with the 5'-terminal helix region of 16S rRNA. This is Ribosome-binding factor A from Alteromonas mediterranea (strain DSM 17117 / CIP 110805 / LMG 28347 / Deep ecotype).